A 101-amino-acid chain; its full sequence is uncharacterized protein (101 aa).

2 consecutive transmembrane segments (helical) span residues Val52–Leu72 and Leu75–Gly95.

Its subcellular location is the endoplasmic reticulum membrane. This is an uncharacterized protein from Schizosaccharomyces pombe (strain 972 / ATCC 24843) (Fission yeast).